The sequence spans 309 residues: Methionyl-tRNA formyltransferase (309 aa).

Position 107 to 110 (107 to 110) interacts with (6S)-5,6,7,8-tetrahydrofolate; it reads SLLP.

This sequence belongs to the Fmt family.

It catalyses the reaction L-methionyl-tRNA(fMet) + (6R)-10-formyltetrahydrofolate = N-formyl-L-methionyl-tRNA(fMet) + (6S)-5,6,7,8-tetrahydrofolate + H(+). Functionally, attaches a formyl group to the free amino group of methionyl-tRNA(fMet). The formyl group appears to play a dual role in the initiator identity of N-formylmethionyl-tRNA by promoting its recognition by IF2 and preventing the misappropriation of this tRNA by the elongation apparatus. The sequence is that of Methionyl-tRNA formyltransferase from Borrelia turicatae (strain 91E135).